The sequence spans 740 residues: Phosphoribosylformylglycinamidine synthase subunit PurL (740 aa).

The active site involves His53. Positions 56 and 95 each coordinate ATP. Glu97 contributes to the Mg(2+) binding site. Substrate contacts are provided by residues 98–101 and Arg120; that span reads SHNH. The active-site Proton acceptor is the His99. Asp121 is a binding site for Mg(2+). A substrate-binding site is contributed by Gln244. Asp272 is a binding site for Mg(2+). Residue 316 to 318 coordinates substrate; the sequence is ESQ. Asp497 and Gly534 together coordinate ATP. Asn535 serves as a coordination point for Mg(2+). Ser537 is a substrate binding site.

Belongs to the FGAMS family. As to quaternary structure, monomer. Part of the FGAM synthase complex composed of 1 PurL, 1 PurQ and 2 PurS subunits.

It localises to the cytoplasm. The enzyme catalyses N(2)-formyl-N(1)-(5-phospho-beta-D-ribosyl)glycinamide + L-glutamine + ATP + H2O = 2-formamido-N(1)-(5-O-phospho-beta-D-ribosyl)acetamidine + L-glutamate + ADP + phosphate + H(+). Its pathway is purine metabolism; IMP biosynthesis via de novo pathway; 5-amino-1-(5-phospho-D-ribosyl)imidazole from N(2)-formyl-N(1)-(5-phospho-D-ribosyl)glycinamide: step 1/2. Functionally, part of the phosphoribosylformylglycinamidine synthase complex involved in the purines biosynthetic pathway. Catalyzes the ATP-dependent conversion of formylglycinamide ribonucleotide (FGAR) and glutamine to yield formylglycinamidine ribonucleotide (FGAM) and glutamate. The FGAM synthase complex is composed of three subunits. PurQ produces an ammonia molecule by converting glutamine to glutamate. PurL transfers the ammonia molecule to FGAR to form FGAM in an ATP-dependent manner. PurS interacts with PurQ and PurL and is thought to assist in the transfer of the ammonia molecule from PurQ to PurL. In Rhodospirillum rubrum (strain ATCC 11170 / ATH 1.1.1 / DSM 467 / LMG 4362 / NCIMB 8255 / S1), this protein is Phosphoribosylformylglycinamidine synthase subunit PurL.